A 605-amino-acid polypeptide reads, in one-letter code: MSLFSAATTAVERTGYGSRYDHIFDMFHPIDGRIPAVCYKRLLETINVSGEDKDRLATLAGSILEGGDGSGGILTSSFTRESWRAALLLANVAQDGLPFDDPSQLVNVDTLTPMDFSEEGERSSINFSASTTGRSQTPLFGDDLDDHSIQSSRSESIIHNNGHSRGHSALDWNPEEQEALQQSQLSQSQLSRSTTPPPLNPQALVPESESGVWTAPPRPDFAPNKADSVTLAIVPEREGMFLFRHVNYSISSVSGTDRITVIRRYSDFSWLQDYLLKKYCFRQVPLLPPKRLAVNGHYLSSDNYFLERRRRGLTRFINQVLRHPVLGQDEAVRTFVTLRNDISGWKKSVFNTAREEFNGRTIDPKFVQQWDEQQATALWAGLIVELDRSHDSVVQLCVLLDRVAKRQEAQAVDSAKIAYNLGAALPPSARVLYSVADDGCVQQITRGLSRASARIETDCQLQQDEARGSQVGVLEEAKKYREALGSMRELFDRLEKYGGNNIPLLEKRIQQNQGRVTLARQRKALMSEIEKLDRAIKMDTEMIAAHKNRTWLIRECITEEIGLFQKTQLQISKLLQEFCVDKIKYAELYSDNWGGLDNDVMDLPV.

Disordered regions lie at residues 113–147 and 175–213; these read PMDF…LDDH and EEQE…SGVW. Residues 123–138 are compositionally biased toward polar residues; the sequence is SSINFSASTTGRSQTP. Low complexity predominate over residues 180-193; that stretch reads LQQSQLSQSQLSRS. The PX domain occupies 226-343; the sequence is ADSVTLAIVP…TFVTLRNDIS (118 aa). Residues arginine 264, serine 266, lysine 290, and arginine 309 each contribute to the a 1,2-diacyl-sn-glycero-3-phospho-(1D-myo-inositol-3-phosphate) site.

It belongs to the sorting nexin family.

Its subcellular location is the cytoplasm. The protein localises to the membrane. Its function is as follows. Required for vacuolar protein sorting. This chain is Sorting nexin MVP1 (MVP1), found in Yarrowia lipolytica (strain CLIB 122 / E 150) (Yeast).